The following is a 352-amino-acid chain: A-type ATP synthase subunit C (352 aa).

The protein belongs to the V-ATPase V0D/AC39 subunit family. As to quaternary structure, has multiple subunits with at least A(3), B(3), C, D, E, F, H, I and proteolipid K(x).

It localises to the cell membrane. Its function is as follows. Component of the A-type ATP synthase that produces ATP from ADP in the presence of a proton gradient across the membrane. This is A-type ATP synthase subunit C from Halobacterium salinarum (strain ATCC 29341 / DSM 671 / R1).